A 358-amino-acid polypeptide reads, in one-letter code: Metacaspase-3 (358 aa).

The tract at residues 1–84 (MGFDFGCLLK…APTHVSGTFR (84 aa)) is important for catalytic activity. Active-site residues include histidine 168 and cysteine 223.

Belongs to the peptidase C14B family. In terms of processing, in epimastigotes, the unprocessed enzyme appears to be the main form. Auto-processing is dispensable for catalytic activity towards small oligopeptide substrates.

The protein resides in the cytoplasm. It localises to the nucleus. With respect to regulation, activated by Ca(2+). Functionally, cysteine protease that cleaves specifically after arginine or lysine residues. In epimastigotes, may play a role in cell cycle G1/S transition. The chain is Metacaspase-3 from Trypanosoma cruzi (strain CL Brener).